Consider the following 288-residue polypeptide: MHQSTLLKPVSCYGIGVHTGKRTQLTIEPAKENTGIIFIRTDISSENNYIEASYCNVSDTLLSTTISNNHKIQISTIEHLMAALWGCSIDNAIIKIDGPEVPIMDGSSKPFVFMIECAGKKLQNAPKKYLKILKEVKVVNKDCELYCTPSEHMAVDLTIDFSSKAIGRQNLSFGMQESFTKNIADARTFGFIRDVEYLKSKGLAQGASFENAIGIDEHDKVLNPSGLRYADEFVRHKLLDLFGDLYTSGISVVSAIKGYKTSHAFNNELLHKIFSDTTSYKFVTSNEL.

The Zn(2+) site is built by His79, His236, and Asp240. The active-site Proton donor is the His263.

It belongs to the LpxC family. The cofactor is Zn(2+).

The enzyme catalyses a UDP-3-O-[(3R)-3-hydroxyacyl]-N-acetyl-alpha-D-glucosamine + H2O = a UDP-3-O-[(3R)-3-hydroxyacyl]-alpha-D-glucosamine + acetate. It functions in the pathway glycolipid biosynthesis; lipid IV(A) biosynthesis; lipid IV(A) from (3R)-3-hydroxytetradecanoyl-[acyl-carrier-protein] and UDP-N-acetyl-alpha-D-glucosamine: step 2/6. Its function is as follows. Catalyzes the hydrolysis of UDP-3-O-myristoyl-N-acetylglucosamine to form UDP-3-O-myristoylglucosamine and acetate, the committed step in lipid A biosynthesis. The chain is UDP-3-O-acyl-N-acetylglucosamine deacetylase from Rickettsia prowazekii (strain Madrid E).